The primary structure comprises 221 residues: PKHD-type hydroxylase P9515_13321 (221 aa).

Residues 80–174 (TIHGIMFTKS…RLVCVGWIES (95 aa)) form the Fe2OG dioxygenase domain. 3 residues coordinate Fe cation: H98, D100, and H155. R165 provides a ligand contact to 2-oxoglutarate.

Fe(2+) is required as a cofactor. It depends on L-ascorbate as a cofactor.

The protein is PKHD-type hydroxylase P9515_13321 of Prochlorococcus marinus (strain MIT 9515).